Consider the following 237-residue polypeptide: Prospore formation at selected spindle poles protein 1 (237 aa).

Its subcellular location is the nucleus. The protein localises to the cytoplasm. It is found in the cytoskeleton. The protein resides in the microtubule organizing center. It localises to the spindle pole body. Functionally, involved in the pathway that organizes the shaping and sizing of the prospore membrane (PSM) during sporulation. Required to localize MPC54 to all four spindle pole bodies, and localize DON1 and SPO14 to four prospore membranes. In Saccharomyces cerevisiae (strain ATCC 204508 / S288c) (Baker's yeast), this protein is Prospore formation at selected spindle poles protein 1 (PFS1).